The sequence spans 502 residues: ATP synthase subunit alpha (502 aa).

The segment at 115–135 is disordered; the sequence is VDGLGPINTTNTRPIESPAPG. 169-176 is an ATP binding site; that stretch reads GDRQTGKT.

Belongs to the ATPase alpha/beta chains family. In terms of assembly, F-type ATPases have 2 components, CF(1) - the catalytic core - and CF(0) - the membrane proton channel. CF(1) has five subunits: alpha(3), beta(3), gamma(1), delta(1), epsilon(1). CF(0) has three main subunits: a(1), b(2) and c(9-12). The alpha and beta chains form an alternating ring which encloses part of the gamma chain. CF(1) is attached to CF(0) by a central stalk formed by the gamma and epsilon chains, while a peripheral stalk is formed by the delta and b chains.

The protein resides in the cell membrane. The enzyme catalyses ATP + H2O + 4 H(+)(in) = ADP + phosphate + 5 H(+)(out). Functionally, produces ATP from ADP in the presence of a proton gradient across the membrane. The alpha chain is a regulatory subunit. This Bacillus anthracis (strain A0248) protein is ATP synthase subunit alpha.